A 320-amino-acid chain; its full sequence is ATP synthase gamma chain (320 aa).

The protein belongs to the ATPase gamma chain family. F-type ATPases have 2 components, CF(1) - the catalytic core - and CF(0) - the membrane proton channel. CF(1) has five subunits: alpha(3), beta(3), gamma(1), delta(1), epsilon(1). CF(0) has three main subunits: a, b and c.

The protein localises to the cell membrane. Functionally, produces ATP from ADP in the presence of a proton gradient across the membrane. The gamma chain is believed to be important in regulating ATPase activity and the flow of protons through the CF(0) complex. The chain is ATP synthase gamma chain from Lactobacillus delbrueckii subsp. bulgaricus (strain ATCC 11842 / DSM 20081 / BCRC 10696 / JCM 1002 / NBRC 13953 / NCIMB 11778 / NCTC 12712 / WDCM 00102 / Lb 14).